Reading from the N-terminus, the 858-residue chain is Heat shock protein 105 kDa (858 aa).

An N-acetylserine modification is found at serine 2. Residue lysine 471 is modified to N6-acetyllysine. 2 disordered regions span residues 500–585 and 801–858; these read KVPT…PPEA and VTQP…MDLD. The segment covering 504-515 has biased composition (acidic residues); that stretch reads EEEDGSSVEADM. 2 positions are modified to phosphoserine: serine 509 and serine 510. Residues 533-555 show a composition bias toward polar residues; sequence QQDNSEAGTQPQVQTDGQQTSQS. Serine 558 bears the Phosphoserine mark. Threonine 562 is modified (phosphothreonine). 2 stretches are compositionally biased toward basic and acidic residues: residues 564-585 and 806-815; these read EENK…PPEA and PKIESPKLER. Serine 810 carries the phosphoserine modification. Phosphothreonine is present on threonine 816.

It belongs to the heat shock protein 70 family. In terms of assembly, interacts with HSPA8/HSC70. Interacts with HSPA1A (via NBD) and HSPA1B (via NBD). Phosphorylation on Ser-509 may be important for regulation of the HSPA8/HSC70 chaperone activity.

Its subcellular location is the cytoplasm. Functionally, acts as a nucleotide-exchange factor (NEF) for chaperone proteins HSPA1A and HSPA1B, promoting the release of ADP from HSPA1A/B thereby triggering substrate release. Prevents the aggregation of denatured proteins in cells under severe stress, on which the ATP levels decrease markedly. Inhibits HSPA8/HSC70 ATPase and chaperone activities. This is Heat shock protein 105 kDa (Hsph1) from Rattus norvegicus (Rat).